Reading from the N-terminus, the 61-residue chain is Large ribosomal subunit protein uL29 (61 aa).

Belongs to the universal ribosomal protein uL29 family.

The polypeptide is Large ribosomal subunit protein uL29 (Nitratidesulfovibrio vulgaris (strain DSM 19637 / Miyazaki F) (Desulfovibrio vulgaris)).